The sequence spans 342 residues: MKHFEFENDKLIVLDQRKLPFEKEYFVCSTYQDVYIAIKDMIIRGAPLIGIVAAYGVVLGFKEIIEKNMDSAKIYEILNYLANSRPTAVNLFWALERMKKVFEEARNLSKSQIYSLLMQEAKKIEDEDKSINKKIGEHGNTLIKEGANILTHCNAGALATGGYGTALGVIREAFFAGKNIHVYVDETRPYLQGARLTAFELSEDGIPNTVICDNMAGYLMKLGKIDCVIVGADRIALNGDTANKIGTYSLSVLAKHHGIPFYISAPISTIDFNIKSGSEIPIEERSEDEIRFFNGKKIVPDESKVFNPAFDVTPAENITAIITEKGVVFPPFEENISKLKEK.

Substrate is bound by residues 44-46 (RGA), Arg-85, and Gln-192. Asp-233 functions as the Proton donor in the catalytic mechanism. 243-244 (NK) is a binding site for substrate.

This sequence belongs to the eIF-2B alpha/beta/delta subunits family. MtnA subfamily.

It carries out the reaction 5-(methylsulfanyl)-alpha-D-ribose 1-phosphate = 5-(methylsulfanyl)-D-ribulose 1-phosphate. The protein operates within amino-acid biosynthesis; L-methionine biosynthesis via salvage pathway; L-methionine from S-methyl-5-thio-alpha-D-ribose 1-phosphate: step 1/6. Its function is as follows. Catalyzes the interconversion of methylthioribose-1-phosphate (MTR-1-P) into methylthioribulose-1-phosphate (MTRu-1-P). The polypeptide is Methylthioribose-1-phosphate isomerase (Caldicellulosiruptor saccharolyticus (strain ATCC 43494 / DSM 8903 / Tp8T 6331)).